We begin with the raw amino-acid sequence, 451 residues long: Glyceraldehyde-3-phosphate dehydrogenase B, chloroplastic (451 aa).

A disordered region spans residues 1–25; it reads MATHAALASTRIPTNTRFPSKTSHS. The N-terminal 84 residues, 1-84, are a transit peptide targeting the chloroplast; it reads MATHAALAST…STAVKGVTVA (84 aa). The span at 11 to 25 shows a compositional bias: polar residues; the sequence is RIPTNTRFPSKTSHS. NADP(+)-binding positions include 95-96, aspartate 119, and arginine 164; that span reads RI. Residues 238–240, threonine 269, arginine 284, 297–298, and arginine 320 each bind D-glyceraldehyde 3-phosphate; these read SCT and TG. The active-site Nucleophile is cysteine 239. Residue asparagine 403 participates in NADP(+) binding.

This sequence belongs to the glyceraldehyde-3-phosphate dehydrogenase family. Tetramer of either four A chains (GAPDH 2) or two A and two B chains (GAPDH 1).

It localises to the plastid. The protein localises to the chloroplast. It carries out the reaction D-glyceraldehyde 3-phosphate + phosphate + NADP(+) = (2R)-3-phospho-glyceroyl phosphate + NADPH + H(+). The protein operates within carbohydrate biosynthesis; Calvin cycle. The chain is Glyceraldehyde-3-phosphate dehydrogenase B, chloroplastic (GAPB) from Pisum sativum (Garden pea).